A 573-amino-acid chain; its full sequence is MSISLLQQERHRYLPKVPDLLRGDFRRVCARRGLSTTAVADYDALRSLFARTYGQPLVNFVNASEKNEDSPMETAPEPRGLRVAIVLSGGQAPGGHNVIAGLFDGLKRWHADSVLIGFLGGPAGVLSGDHIEICADRVDAYRNTGGFDLIGSGRTKIESESQFAAAAQTVTRMALDALVVVGGDDSNTNAALLAEHFVNSGISTKVIGVPKTIDGDLKNEAIETSFGFDTATKTYSELIGNIARDACSARKYWHFIKLMGRSASHIALECALKTQPNVCLISEEVAAQSLTLAQIVQSLCDTIATRAQHGEHFGIVLVPEGLIEFIPEMKALITELNEVMARRAQEFEALDTPDAQRVWIEQALSASARAVFNALPAEISTQLLADRDPHGNVQVSRIDTERLLILQVTERLAQMKQEGTYTGVFSSIAHFFGYEGRCAFPSNFDADYCYTLGLTACLLAVHRFTGYVASVRNLTSSVAEWAVGGVPLTMLMNMERRHGSQKPVIKKALVDLEGMPFRVFSRRRASWALKTSYVYPGAVQYYGPPAVCDEPSVTIRLERPAPAANSSFGHRSS.

A diphosphate-binding site is contributed by glycine 90. Aspartate 184 contributes to the Mg(2+) binding site. Residues 212–214 (TID), 251–252 (KY), 259–261 (MGR), glutamate 320, and 434–437 (YEGR) each bind substrate. The active-site Proton acceptor is aspartate 214.

This sequence belongs to the phosphofructokinase type A (PFKA) family. PPi-dependent PFK group II subfamily. Clade 'Long' sub-subfamily. In terms of assembly, homodimer. Mg(2+) serves as cofactor.

Its subcellular location is the cytoplasm. It catalyses the reaction beta-D-fructose 6-phosphate + diphosphate = beta-D-fructose 1,6-bisphosphate + phosphate + H(+). It functions in the pathway carbohydrate degradation; glycolysis; D-glyceraldehyde 3-phosphate and glycerone phosphate from D-glucose: step 3/4. Non-allosteric. Catalyzes the phosphorylation of D-fructose 6-phosphate, the first committing step of glycolysis. Uses inorganic phosphate (PPi) as phosphoryl donor instead of ATP like common ATP-dependent phosphofructokinases (ATP-PFKs), which renders the reaction reversible, and can thus function both in glycolysis and gluconeogenesis. Consistently, PPi-PFK can replace the enzymes of both the forward (ATP-PFK) and reverse (fructose-bisphosphatase (FBPase)) reactions. This Treponema pallidum (strain Nichols) protein is Pyrophosphate--fructose 6-phosphate 1-phosphotransferase.